The chain runs to 245 residues: Balbiani ring A 28 kDa protein (245 aa).

The signal sequence occupies residues 1–16 (MKSIIKHILFVVLLIS). 5 positions are modified to phosphoserine: serine 33, serine 40, serine 92, serine 93, and serine 115.

As to expression, salivary gland.

The protein resides in the secreted. Functionally, used by the larvae to construct a supramolecular structure, the larval tube. This is Balbiani ring A 28 kDa protein from Chironomus thummi thummi (Midge).